The following is a 400-amino-acid chain: Probable peptidoglycan glycosyltransferase FtsW (400 aa).

The next 11 helical transmembrane spans lie at 30 to 50 (LSVL…SIGI), 65 to 84 (QAAY…RIRL), 92 to 112 (GLLL…GVGV), 123 to 143 (LGLF…LYLA), 157 to 177 (FAGF…LLME), 179 to 199 (DFGA…LAGA), 201 to 221 (LWQF…LAIT), 247 to 267 (TQSL…GASV), 280 to 300 (FLFA…VVLL), 321 to 341 (LFGA…AFIN), and 356 to 376 (LPLM…VGLL).

It belongs to the SEDS family. FtsW subfamily.

The protein localises to the cell inner membrane. The enzyme catalyses [GlcNAc-(1-&gt;4)-Mur2Ac(oyl-L-Ala-gamma-D-Glu-L-Lys-D-Ala-D-Ala)](n)-di-trans,octa-cis-undecaprenyl diphosphate + beta-D-GlcNAc-(1-&gt;4)-Mur2Ac(oyl-L-Ala-gamma-D-Glu-L-Lys-D-Ala-D-Ala)-di-trans,octa-cis-undecaprenyl diphosphate = [GlcNAc-(1-&gt;4)-Mur2Ac(oyl-L-Ala-gamma-D-Glu-L-Lys-D-Ala-D-Ala)](n+1)-di-trans,octa-cis-undecaprenyl diphosphate + di-trans,octa-cis-undecaprenyl diphosphate + H(+). It functions in the pathway cell wall biogenesis; peptidoglycan biosynthesis. In terms of biological role, peptidoglycan polymerase that is essential for cell division. The polypeptide is Probable peptidoglycan glycosyltransferase FtsW (Thioalkalivibrio sulfidiphilus (strain HL-EbGR7)).